The following is a 210-amino-acid chain: Guanylate kinase (210 aa).

In terms of domain architecture, Guanylate kinase-like spans 5–184 (GLLIVFSGPS…AAERVKHIIE (180 aa)). 12-19 (GPSGVGKG) contacts ATP.

This sequence belongs to the guanylate kinase family.

The protein resides in the cytoplasm. The catalysed reaction is GMP + ATP = GDP + ADP. Functionally, essential for recycling GMP and indirectly, cGMP. The chain is Guanylate kinase from Streptococcus mutans serotype c (strain ATCC 700610 / UA159).